The sequence spans 317 residues: Acetyl-coenzyme A carboxylase carboxyl transferase subunit alpha (317 aa).

The 254-residue stretch at 40-293 (LEGRVRDAMM…GTVIADALKE (254 aa)) folds into the CoA carboxyltransferase C-terminal domain.

The protein belongs to the AccA family. As to quaternary structure, acetyl-CoA carboxylase is a heterohexamer composed of biotin carboxyl carrier protein (AccB), biotin carboxylase (AccC) and two subunits each of ACCase subunit alpha (AccA) and ACCase subunit beta (AccD).

The protein resides in the cytoplasm. The enzyme catalyses N(6)-carboxybiotinyl-L-lysyl-[protein] + acetyl-CoA = N(6)-biotinyl-L-lysyl-[protein] + malonyl-CoA. Its pathway is lipid metabolism; malonyl-CoA biosynthesis; malonyl-CoA from acetyl-CoA: step 1/1. Functionally, component of the acetyl coenzyme A carboxylase (ACC) complex. First, biotin carboxylase catalyzes the carboxylation of biotin on its carrier protein (BCCP) and then the CO(2) group is transferred by the carboxyltransferase to acetyl-CoA to form malonyl-CoA. This chain is Acetyl-coenzyme A carboxylase carboxyl transferase subunit alpha, found in Sinorhizobium fredii (strain NBRC 101917 / NGR234).